We begin with the raw amino-acid sequence, 435 residues long: MERHDGEEYIPAIFGGQPPHASQVISLMKFSQETTTWNLPIMIAQALLVSEVIRTYPAELRMLHRLFQRKHPNMAEIFFILIKYLTIFAVIFDILVTETFAARTDFDCRSWAWTSSTFYFMCSTLVFCVIGWRARIIFRTSQVASWSLSVGLMGQFAVAMWTNYRVDKADALTPAGTCAPAAQVHADASQRNAALQLHFWQSSTFWFLLYNTIFESSILMACCIKLRKTSSGPSGLTKIAKVLFSNNVHYMAGVETCNVIELVMLLGWTSSLPPVHITSIAIQIVVGLQMLIGEQEAVYSPTCSQLSYSQYSSDSGGYINKHHAATSSSNGTFSTPSRTLSYVKRPGTGTTVADIGCADASGGGQHGRKGTFSSISSVPAYVKANPIVETVSPQMPSKAQSQSIPYKREVEVTVDMSPVPPPPGPSPAPLPAPYM.

The next 5 membrane-spanning stretches (helical) occupy residues 33–53, 77–97, 111–131, 143–163, and 204–224; these read ETTTWNLPIMIAQALLVSEVI, IFFILIKYLTIFAVIFDILVT, WAWTSSTFYFMCSTLVFCVIG, VASWSLSVGLMGQFAVAMWTN, and TFWFLLYNTIFESSILMACCI. N-linked (GlcNAc...) asparagine glycosylation is present at N330. Polar residues predominate over residues 392–404; the sequence is SPQMPSKAQSQSI. The tract at residues 392–435 is disordered; that stretch reads SPQMPSKAQSQSIPYKREVEVTVDMSPVPPPPGPSPAPLPAPYM. Residues 418-435 show a composition bias toward pro residues; that stretch reads PVPPPPGPSPAPLPAPYM.

In terms of processing, O-mannosylated by PMT4. Is also N-glycosylated.

The protein localises to the cell membrane. Its function is as follows. Plasma membrane virulence factor required for spreading and inducing tumors in infected leaves. This Mycosarcoma maydis (Corn smut fungus) protein is Virulence factor PIT1.